The following is a 120-amino-acid chain: Non-specific lipid-transfer protein 2 (120 aa).

Residues methionine 1–alanine 25 form the signal peptide. 4 disulfides stabilise this stretch: cysteine 29–cysteine 78, cysteine 39–cysteine 55, cysteine 56–cysteine 101, and cysteine 76–cysteine 115.

The protein belongs to the plant LTP family. In terms of tissue distribution, expressed in roots, stem, leaves and tendrils of the mature plant.

Plant non-specific lipid-transfer proteins transfer phospholipids as well as galactolipids across membranes. May play a role in wax or cutin deposition in the cell walls of expanding epidermal cells and certain secretory tissues. This chain is Non-specific lipid-transfer protein 2, found in Pisum sativum (Garden pea).